We begin with the raw amino-acid sequence, 128 residues long: DNA-directed RNA polymerase subunit omega (128 aa).

The tract at residues A87–F106 is disordered.

It belongs to the RNA polymerase subunit omega family. As to quaternary structure, the RNAP catalytic core consists of 2 alpha, 1 beta, 1 beta' and 1 omega subunit. When a sigma factor is associated with the core the holoenzyme is formed, which can initiate transcription.

The catalysed reaction is RNA(n) + a ribonucleoside 5'-triphosphate = RNA(n+1) + diphosphate. Promotes RNA polymerase assembly. Latches the N- and C-terminal regions of the beta' subunit thereby facilitating its interaction with the beta and alpha subunits. The sequence is that of DNA-directed RNA polymerase subunit omega from Anaplasma marginale (strain St. Maries).